Consider the following 289-residue polypeptide: Digeranylgeranylglyceryl phosphate synthase (289 aa).

8 consecutive transmembrane segments (helical) span residues 17 to 37 (CLMAGFAAIIGTLIAFNILTS), 50 to 70 (LFSSVLIFLAVFLVAGAGNAI), 106 to 126 (FALGTLLAFSINPICGVIALF), 141 to 161 (TPLLGNLSIGYLTGSSFLFGA), 163 to 183 (VFGLEGLKALFVLFLLAALAI), 221 to 241 (LIGFLAVIFSPLPYHLSMLGL), 243 to 263 (YLYLVLLADLGFLAAIYQLLA), and 269 to 289 (KSSKMFKIAMFFALIAFIAGV).

Belongs to the UbiA prenyltransferase family. DGGGP synthase subfamily. Mg(2+) is required as a cofactor.

The protein localises to the cell membrane. The enzyme catalyses sn-3-O-(geranylgeranyl)glycerol 1-phosphate + (2E,6E,10E)-geranylgeranyl diphosphate = 2,3-bis-O-(geranylgeranyl)-sn-glycerol 1-phosphate + diphosphate. The protein operates within membrane lipid metabolism; glycerophospholipid metabolism. Its function is as follows. Prenyltransferase that catalyzes the transfer of the geranylgeranyl moiety of geranylgeranyl diphosphate (GGPP) to the C2 hydroxyl of (S)-3-O-geranylgeranylglyceryl phosphate (GGGP). This reaction is the second ether-bond-formation step in the biosynthesis of archaeal membrane lipids. This Methanosarcina barkeri (strain Fusaro / DSM 804) protein is Digeranylgeranylglyceryl phosphate synthase.